A 371-amino-acid polypeptide reads, in one-letter code: Probable tRNA sulfurtransferase (371 aa).

One can recognise a THUMP domain in the interval 54–156 (NANIEALSEV…NEMTYFYHKV (103 aa)). Residues 174 to 175 (LF), 199 to 200 (NF), lysine 254, glycine 276, and glutamine 285 contribute to the ATP site.

This sequence belongs to the ThiI family.

Its subcellular location is the cytoplasm. It carries out the reaction [ThiI sulfur-carrier protein]-S-sulfanyl-L-cysteine + a uridine in tRNA + 2 reduced [2Fe-2S]-[ferredoxin] + ATP + H(+) = [ThiI sulfur-carrier protein]-L-cysteine + a 4-thiouridine in tRNA + 2 oxidized [2Fe-2S]-[ferredoxin] + AMP + diphosphate. It catalyses the reaction [ThiS sulfur-carrier protein]-C-terminal Gly-Gly-AMP + S-sulfanyl-L-cysteinyl-[cysteine desulfurase] + AH2 = [ThiS sulfur-carrier protein]-C-terminal-Gly-aminoethanethioate + L-cysteinyl-[cysteine desulfurase] + A + AMP + 2 H(+). It functions in the pathway cofactor biosynthesis; thiamine diphosphate biosynthesis. Catalyzes the ATP-dependent transfer of a sulfur to tRNA to produce 4-thiouridine in position 8 of tRNAs, which functions as a near-UV photosensor. Also catalyzes the transfer of sulfur to the sulfur carrier protein ThiS, forming ThiS-thiocarboxylate. This is a step in the synthesis of thiazole, in the thiamine biosynthesis pathway. The sulfur is donated as persulfide by IscS. The protein is Probable tRNA sulfurtransferase of Saccharolobus solfataricus (strain ATCC 35092 / DSM 1617 / JCM 11322 / P2) (Sulfolobus solfataricus).